Reading from the N-terminus, the 269-residue chain is Indole-3-glycerol phosphate synthase (269 aa).

This sequence belongs to the TrpC family.

It catalyses the reaction 1-(2-carboxyphenylamino)-1-deoxy-D-ribulose 5-phosphate + H(+) = (1S,2R)-1-C-(indol-3-yl)glycerol 3-phosphate + CO2 + H2O. The protein operates within amino-acid biosynthesis; L-tryptophan biosynthesis; L-tryptophan from chorismate: step 4/5. This chain is Indole-3-glycerol phosphate synthase, found in Rhodococcus opacus (strain B4).